The primary structure comprises 664 residues: MEVEKKIRGLREELQQHNYNYYVLDKPQISDYEFDIKLKELQELEEKYPEFEDDNSPTRRVGGAVTKNFETVVHENRMYSLSNSYSKEELEEWEARLKKIVEGKIQYVCELKYDGASISLTYENGILKRAVTRGDGFQGDDVTNNIKTIRSVPLKLKDEFPHKFDIRGEIVLPYEGFAKMNAERVEMGEEPYANPRNTASGSLKLQDSAEVARRPLECLLYSITGENTGVASQFEGLEKARKWGFKVPAESELKDSIEEVLHYINYWDEHRHDLPYETDGVVVKVNNFHQQEELGHTAKSPRWAIAYKFKAEQESTKLNKITYQVGRTGAITPVANLDAVQLAGTVVRRASLHNADQIEKLDVREGDTVFVEKGGEIIPKIVGVDFTKRDPDSNPTQYATNCPECDSELIRKDGEAQHYCPNVNGCPPQIIGRIQHYISRKAMDIEGLGGETVALLVNADLIESYADLYKLQKEEVLPLERMAEKSAENLINGIERSKEIPFERVLFALGIRYVGETVAKKLAKHFKSIEALMAASEEELVNIDEIGERIAWSVVEFFNIEANRENVERLKEYGIQLEISAEKLANQTNILEGNTFVISGVFEKVSRNDLKKMIEDNGGKLSSSISSKTNYLVAGDNMGPSKLAKAEKLGTSIISEEDFLKMLE.

NAD(+)-binding positions include 31–35 (DYEFD), 80–81 (SL), and Glu-110. Lys-112 (N6-AMP-lysine intermediate) is an active-site residue. NAD(+) is bound by residues Arg-133 and Glu-169. The BRCT 1 domain maps to 237–257 (LEKARKWGFKVPAESELKDSI). The NAD(+) site is built by Lys-284 and Lys-308. Positions 402, 405, 420, and 426 each coordinate Zn(2+). The region spanning 586-664 (NQTNILEGNT…SEEDFLKMLE (79 aa)) is the BRCT 2 domain.

It belongs to the NAD-dependent DNA ligase family. LigA subfamily. Mg(2+) is required as a cofactor. The cofactor is Mn(2+).

The enzyme catalyses NAD(+) + (deoxyribonucleotide)n-3'-hydroxyl + 5'-phospho-(deoxyribonucleotide)m = (deoxyribonucleotide)n+m + AMP + beta-nicotinamide D-nucleotide.. DNA ligase that catalyzes the formation of phosphodiester linkages between 5'-phosphoryl and 3'-hydroxyl groups in double-stranded DNA using NAD as a coenzyme and as the energy source for the reaction. It is essential for DNA replication and repair of damaged DNA. This Christiangramia forsetii (strain DSM 17595 / CGMCC 1.15422 / KT0803) (Gramella forsetii) protein is DNA ligase.